Here is a 444-residue protein sequence, read N- to C-terminus: Type VI secretion system baseplate component TssK1 (444 aa).

Forms transient higher-order structures that correlated with dynamics of sheath component TssB1. Interacts with TssA1.

In terms of biological role, core component of the H1 type VI (H1-T6SS) secretion system that plays a role in the release of toxins targeting both eukaryotic and prokaryotic species. Functions as a spatio-temporal marker for assembly of contractile apparatus made of TssB1 and TssC1. This role in assembly depends on TssM1. In Pseudomonas aeruginosa (strain ATCC 15692 / DSM 22644 / CIP 104116 / JCM 14847 / LMG 12228 / 1C / PRS 101 / PAO1), this protein is Type VI secretion system baseplate component TssK1.